A 122-amino-acid chain; its full sequence is Large ribosomal subunit protein uL14 (122 aa).

Belongs to the universal ribosomal protein uL14 family. Part of the 50S ribosomal subunit. Forms a cluster with proteins L3 and L19. In the 70S ribosome, L14 and L19 interact and together make contacts with the 16S rRNA in bridges B5 and B8.

Functionally, binds to 23S rRNA. Forms part of two intersubunit bridges in the 70S ribosome. The protein is Large ribosomal subunit protein uL14 of Lysinibacillus sphaericus (strain C3-41).